Reading from the N-terminus, the 29-residue chain is Brevinin-2Ee (29 aa).

A disulfide bridge links Cys-23 with Cys-29.

The protein belongs to the frog skin active peptide (FSAP) family. Brevinin subfamily. Expressed by the skin glands.

It localises to the secreted. Shows antibacterial activity against representative Gram-negative and Gram-positive bacterial species, and hemolytic activity. The sequence is that of Brevinin-2Ee from Pelophylax lessonae (Pool frog).